Here is a 275-residue protein sequence, read N- to C-terminus: Large ribosomal subunit protein uL2 (275 aa).

A disordered region spans residues 223 to 275 (VAMNPIDHPHGGGEGRTGEAREPVSPWGTPSKGYKTRRNKRTNNMIVQRRKRK). A compositionally biased stretch (basic and acidic residues) spans 229 to 244 (DHPHGGGEGRTGEARE).

This sequence belongs to the universal ribosomal protein uL2 family. As to quaternary structure, part of the 50S ribosomal subunit. Forms a bridge to the 30S subunit in the 70S ribosome.

In terms of biological role, one of the primary rRNA binding proteins. Required for association of the 30S and 50S subunits to form the 70S ribosome, for tRNA binding and peptide bond formation. It has been suggested to have peptidyltransferase activity; this is somewhat controversial. Makes several contacts with the 16S rRNA in the 70S ribosome. The protein is Large ribosomal subunit protein uL2 of Bordetella avium (strain 197N).